The sequence spans 392 residues: MTIPDVPTQTLPDEGEIGFVHIGSLTTEAGAVIDDVHIAVQRWGELSPTRDNVVVVLHALTGDSHVTGPAGPGHPTGGWWDEMVGPGAPIDTDRWCAVATNVLGGCRGSTGPSSRTRDGKPWGSRFPRISIRDQVEADIAALAALGIDEVAAVVGGSMGGARALEWIVGHPSRVRAGLLLAVGARATADQIGTQCTQIAAIKSDPNWQGGDYHDTGRTPDAGLAIARRFAHLTYRGEVELDTRFGNDAQLDEDPANSGRYAVQSYLEYQGVKLVERFDAGSYVVLTEALNSHDVGRARGGVRKALRSCPVPVVVGGITSDRLYPLRLQQELAEQLPGCAELQVVDSICGHDGFLVESEAVGEMIRKTLLLAGSQSAGPGGAGPGSRKGTTRR.

The region spanning 52 to 356 (NVVVVLHALT…ICGHDGFLVE (305 aa)) is the AB hydrolase-1 domain. Serine 157 functions as the Nucleophile in the catalytic mechanism. Residue arginine 227 participates in substrate binding. Residues aspartate 320 and histidine 350 contribute to the active site. Position 351 (aspartate 351) interacts with substrate. The interval 373–392 (SQSAGPGGAGPGSRKGTTRR) is disordered.

It belongs to the AB hydrolase superfamily. MetX family. Homodimer.

The protein resides in the cytoplasm. It carries out the reaction L-homoserine + acetyl-CoA = O-acetyl-L-homoserine + CoA. Its pathway is amino-acid biosynthesis; L-methionine biosynthesis via de novo pathway; O-acetyl-L-homoserine from L-homoserine: step 1/1. Its function is as follows. Transfers an acetyl group from acetyl-CoA to L-homoserine, forming acetyl-L-homoserine. In Mycolicibacterium paratuberculosis (strain ATCC BAA-968 / K-10) (Mycobacterium paratuberculosis), this protein is Homoserine O-acetyltransferase.